A 198-amino-acid chain; its full sequence is COMM domain-containing protein 9 (198 aa).

Alanine 2 carries the N-acetylalanine modification. The COMM domain maps to 122–196 (RLVDLDWRVD…RIRDQLSAVA (75 aa)).

It belongs to the COMM domain-containing protein 9 family. In terms of assembly, component of the commander complex consisting of the CCC subcomplex and the retriever subcomplex. Component of the CCC (COMMD/CCDC22/CCDC93) subcomplex consisting of COMMD1, COMMD2, COMMD3, COMMD4, COMMD5, COMMD6, COMMD7, COMMD8, COMMD9, COMMD10, CCDC22 and CCDC93; within the complex forms a heterodimer with COMMD7. Interacts with RELB and NFKB1/p105. Interacts with CCDC22, CCDC93, SCNN1B, CUL1.

The protein localises to the nucleus. The protein resides in the cytoplasmic vesicle. In terms of biological role, scaffold protein in the commander complex that is essential for endosomal recycling of transmembrane cargos; the commander complex is composed of the CCC subcomplex and the retriever subcomplex. May modulate activity of cullin-RING E3 ubiquitin ligase (CRL) complexes. May down-regulate activation of NF-kappa-B. Modulates Na(+) transport in epithelial cells by regulation of apical cell surface expression of amiloride-sensitive sodium channel (ENaC) subunits. The polypeptide is COMM domain-containing protein 9 (Commd9) (Mus musculus (Mouse)).